Consider the following 196-residue polypeptide: Large ribosomal subunit protein uL10 (196 aa).

A disordered region spans residues 169–196 (KAAECPAEAPQPAAETPAEAPEAPADAE). Over residues 172-196 (ECPAEAPQPAAETPAEAPEAPADAE) the composition is skewed to low complexity.

It belongs to the universal ribosomal protein uL10 family. In terms of assembly, part of the ribosomal stalk of the 50S ribosomal subunit. The N-terminus interacts with L11 and the large rRNA to form the base of the stalk. The C-terminus forms an elongated spine to which L12 dimers bind in a sequential fashion forming a multimeric L10(L12)X complex.

In terms of biological role, forms part of the ribosomal stalk, playing a central role in the interaction of the ribosome with GTP-bound translation factors. This is Large ribosomal subunit protein uL10 from Mycobacterium avium (strain 104).